The sequence spans 95 residues: Cerebratulus toxin A-III (95 aa).

3 cysteine pairs are disulfide-bonded: cysteine 17–cysteine 38, cysteine 23–cysteine 34, and cysteine 48–cysteine 61.

Belongs to the worm cytolysin family.

The protein resides in the secreted. In terms of biological role, permeabilizes a variety of cells. Forms large pores which allows the release of large proteins almost as rapidly as small organic molecules and inorganic ions. At sublytic concentrations, the toxin also inhibits protein kinase C and endogenous voltage-gated cation selective (sodium, calcium) channels occurring in the nervous and cardiovascular systems. This chain is Cerebratulus toxin A-III, found in Cerebratulus lacteus (Milky ribbon worm).